Here is a 316-residue protein sequence, read N- to C-terminus: Protein U25 (316 aa).

Belongs to the herpesviridae US22 family.

The sequence is that of Protein U25 (U25) from Homo sapiens (Human).